Consider the following 30-residue polypeptide: Kalata-B5 (30 aa).

Residues 1–30 (GTPCGESCVYIPCISGVIGCSCTDKVCYLN) constitute a cross-link (cyclopeptide (Gly-Asn)). Cystine bridges form between cysteine 4–cysteine 20, cysteine 8–cysteine 22, and cysteine 13–cysteine 27.

This is a cyclic peptide.

Functionally, probably participates in a plant defense mechanism. This Oldenlandia affinis protein is Kalata-B5.